Here is a 464-residue protein sequence, read N- to C-terminus: ATP-dependent protease ATPase subunit HslU (464 aa).

Residues Val18, 60-65, Asp277, Glu342, and Arg414 contribute to the ATP site; that span reads GVGKTE.

The protein belongs to the ClpX chaperone family. HslU subfamily. A double ring-shaped homohexamer of HslV is capped on each side by a ring-shaped HslU homohexamer. The assembly of the HslU/HslV complex is dependent on binding of ATP.

It localises to the cytoplasm. Functionally, ATPase subunit of a proteasome-like degradation complex; this subunit has chaperone activity. The binding of ATP and its subsequent hydrolysis by HslU are essential for unfolding of protein substrates subsequently hydrolyzed by HslV. HslU recognizes the N-terminal part of its protein substrates and unfolds these before they are guided to HslV for hydrolysis. The polypeptide is ATP-dependent protease ATPase subunit HslU (Lactobacillus delbrueckii subsp. bulgaricus (strain ATCC BAA-365 / Lb-18)).